Here is a 38-residue protein sequence, read N- to C-terminus: Photosystem II reaction center protein L (38 aa).

The helical transmembrane segment at 17–37 (SLYWGLLLIFVLAVSFSNYFF) threads the bilayer.

Belongs to the PsbL family. In terms of assembly, PSII is composed of 1 copy each of membrane proteins PsbA, PsbB, PsbC, PsbD, PsbE, PsbF, PsbH, PsbI, PsbJ, PsbK, PsbL, PsbM, PsbT, PsbX, PsbY, PsbZ, Psb30/Ycf12, at least 3 peripheral proteins of the oxygen-evolving complex and a large number of cofactors. It forms dimeric complexes.

It localises to the plastid membrane. Its function is as follows. One of the components of the core complex of photosystem II (PSII). PSII is a light-driven water:plastoquinone oxidoreductase that uses light energy to abstract electrons from H(2)O, generating O(2) and a proton gradient subsequently used for ATP formation. It consists of a core antenna complex that captures photons, and an electron transfer chain that converts photonic excitation into a charge separation. This subunit is found at the monomer-monomer interface and is required for correct PSII assembly and/or dimerization. The chain is Photosystem II reaction center protein L from Aneura mirabilis (Parasitic liverwort).